We begin with the raw amino-acid sequence, 181 residues long: ATP-dependent protease subunit HslV (181 aa).

Threonine 9 is an active-site residue. The Na(+) site is built by serine 166, cysteine 169, and threonine 172.

The protein belongs to the peptidase T1B family. HslV subfamily. In terms of assembly, a double ring-shaped homohexamer of HslV is capped on each side by a ring-shaped HslU homohexamer. The assembly of the HslU/HslV complex is dependent on binding of ATP.

Its subcellular location is the cytoplasm. It carries out the reaction ATP-dependent cleavage of peptide bonds with broad specificity.. Allosterically activated by HslU binding. Its function is as follows. Protease subunit of a proteasome-like degradation complex believed to be a general protein degrading machinery. The polypeptide is ATP-dependent protease subunit HslV (Staphylococcus haemolyticus (strain JCSC1435)).